We begin with the raw amino-acid sequence, 121 residues long: Small ribosomal subunit protein bS16 (121 aa).

The interval 88-121 (GKAKLEKEKKAKAKTKEEENEGSKTESGSNEAES) is disordered. The span at 90–111 (AKLEKEKKAKAKTKEEENEGSK) shows a compositional bias: basic and acidic residues. Residues 112–121 (TESGSNEAES) are compositionally biased toward polar residues.

This sequence belongs to the bacterial ribosomal protein bS16 family.

In Prochlorococcus marinus (strain MIT 9215), this protein is Small ribosomal subunit protein bS16.